We begin with the raw amino-acid sequence, 2240 residues long: Death-inducer obliterator 1 (2240 aa).

N-acetylmethionine is present on methionine 1. Positions 1-25 (MDDKGDPSNEEAPKAIKPTSKEFRK) are enriched in basic and acidic residues. Positions 1–259 (MDDKGDPSNE…EPGDLGRPKP (259 aa)) are disordered. Phosphoserine occurs at positions 60 and 114. Positions 111–130 (SEGSVESASETRSGPQSAST) are enriched in polar residues. A compositionally biased stretch (basic and acidic residues) spans 132 to 146 (VKERPASSEKVKGGD). Over residues 147–156 (DHDDTSDSDS) the composition is skewed to acidic residues. Residue threonine 151 is modified to Phosphothreonine. 2 positions are modified to phosphoserine: serine 152 and serine 154. 2 short sequence motifs (nuclear localization signal) span residues 165-173 (QNRLRRKRE) and 185-193 (QSRLRKKRR). Residues 172 to 181 (REQEPTERPL) are compositionally biased toward basic and acidic residues. The segment covering 230 to 246 (GKDDRESKLEGKAAQDI) has biased composition (basic and acidic residues). A Glycyl lysine isopeptide (Lys-Gly) (interchain with G-Cter in SUMO2) cross-link involves residue lysine 247. The PHD-type zinc finger occupies 268-322 (ALYCICRQPHNNRFMICCDRCEEWFHGDCVGISEARGRLLERNGEDYICPNCTIL). Disordered regions lie at residues 431–456 (SGKEQKPKPKEKMKMKPEKPSLPKCG), 501–567 (STPS…RNLV), 584–618 (KKPPSGFKGTIPKRPWLSATPSSGASAARQAGPAP), 773–826 (RPAR…EKST), 860–947 (VPSA…EDLS), 1013–1045 (LAKPSSSPDPRYLSVPPSPNISTSESRSPPEGD), 1206–1427 (GELD…VAYD), 1453–1472 (RRNSVERPAEPVAGAATPSL), and 1517–2240 (SDAL…ASQA). Over residues 433–451 (KEQKPKPKEKMKMKPEKPS) the composition is skewed to basic and acidic residues. Residues 501–510 (STPSWASDHN) are compositionally biased toward polar residues. At serine 523 the chain carries Phosphoserine. A compositionally biased stretch (basic and acidic residues) spans 530–541 (STKEDRRSEEKA). Composition is skewed to low complexity over residues 542 to 551 (AAMAASKKTA) and 604 to 618 (PSSGASAARQAGPAP). Residues 670–790 (IRQNIRRSLK…SRTKLHNESK (121 aa)) form the TFIIS central domain. Residues 773–791 (RPARSVMESRTKLHNESKK) show a composition bias toward basic and acidic residues. Acidic residues predominate over residues 800 to 815 (PDLEDSPPVSDSEEQQ). Phosphoserine is present on residues serine 805 and serine 809. A compositionally biased stretch (basic and acidic residues) spans 878 to 890 (VKKEDLKSKHDSS). Lysine 879 is covalently cross-linked (Glycyl lysine isopeptide (Lys-Gly) (interchain with G-Cter in SUMO2)). Serine 889 and serine 898 each carry phosphoserine. The segment covering 930–941 (PGPPGDGHPEPS) has biased composition (pro residues). Serine 1019, serine 1030, and serine 1040 each carry phosphoserine. The span at 1207–1220 (ELDKMDEKRTRLQP) shows a compositional bias: basic and acidic residues. Tyrosine 1244 is subject to Phosphotyrosine. A Phosphothreonine modification is found at threonine 1256. The span at 1258–1271 (PGSPPPPPPLPEPP) shows a compositional bias: pro residues. Residues serine 1260 and serine 1312 each carry the phosphoserine modification. Residues 1276–1313 (LSSLKPAAPSPATAATTAAAASTAASSTASSASKTASP) are compositionally biased toward low complexity. Over residues 1376-1392 (LEEEEDDRPYDPEEEYD) the composition is skewed to acidic residues. Positions 1393–1424 (PERAFDTQLVERGRRHEVERAPEAAAAEREEV) are enriched in basic and acidic residues. Residue serine 1456 is modified to Phosphoserine. Threonine 1469 is modified (phosphothreonine). Phosphoserine is present on residues serine 1522 and serine 1714. The span at 1771-1782 (FPGPRGPAPPFP) shows a compositional bias: pro residues. Omega-N-methylarginine is present on arginine 1835. Residues 1842–1856 (FEERKDPHGEKREFQ) show a composition bias toward basic and acidic residues. Residues arginine 1893, arginine 1894, arginine 1977, arginine 1982, arginine 1993, arginine 2008, and arginine 2024 each carry the asymmetric dimethylarginine modification. The span at 2044–2059 (AGPPSALSSSAPGQGP) shows a compositional bias: low complexity. 2 stretches are compositionally biased toward basic and acidic residues: residues 2069-2101 (DFREGKGHEYRNQTFEGRQRERFDVGPKEKPLE) and 2109-2230 (ASED…EASR).

Interacts specifically (via PHD-type zinc finger) with histone H3 that is trimethylated at 'Lys-4' (H3K4me3), histone phosphorylation at 'Thr-3' or 'Thr-6' disrupts this binding and promotes translocation of DIDO1 from chromatin to the mitotic spindle during mitosis. In terms of tissue distribution, ubiquitous.

The protein resides in the cytoplasm. The protein localises to the nucleus. It is found in the cytoskeleton. Its subcellular location is the spindle. Functionally, putative transcription factor, weakly pro-apoptotic when overexpressed. Tumor suppressor. Required for early embryonic stem cell development. Its function is as follows. Displaces isoform 4 at the onset of differentiation, required for repression of stemness genes. The polypeptide is Death-inducer obliterator 1 (DIDO1) (Homo sapiens (Human)).